The following is a 320-amino-acid chain: Cytochrome f (320 aa).

Positions 1–35 (MQIRNTFSSLKGEITRFISVSLMIYIITRASISNA) are cleaved as a signal peptide. The heme site is built by Tyr-36, Cys-56, Cys-59, and His-60. The helical transmembrane segment at 286–306 (VQGLLFFLASVVLAQIFLVLK) threads the bilayer.

It belongs to the cytochrome f family. The 4 large subunits of the cytochrome b6-f complex are cytochrome b6, subunit IV (17 kDa polypeptide, petD), cytochrome f and the Rieske protein, while the 4 small subunits are PetG, PetL, PetM and PetN. The complex functions as a dimer. The cofactor is heme.

The protein resides in the plastid. It is found in the chloroplast thylakoid membrane. Its function is as follows. Component of the cytochrome b6-f complex, which mediates electron transfer between photosystem II (PSII) and photosystem I (PSI), cyclic electron flow around PSI, and state transitions. The sequence is that of Cytochrome f from Citrus sinensis (Sweet orange).